A 124-amino-acid chain; its full sequence is Small ribosomal subunit protein uS12 (124 aa).

Asp-89 bears the 3-methylthioaspartic acid mark. At Lys-108 the chain carries N6-acetyllysine.

It belongs to the universal ribosomal protein uS12 family. In terms of assembly, part of the 30S ribosomal subunit. Contacts proteins S8 and S17. May interact with IF1 in the 30S initiation complex.

In terms of biological role, with S4 and S5 plays an important role in translational accuracy. Functionally, interacts with and stabilizes bases of the 16S rRNA that are involved in tRNA selection in the A site and with the mRNA backbone. Located at the interface of the 30S and 50S subunits, it traverses the body of the 30S subunit contacting proteins on the other side and probably holding the rRNA structure together. The combined cluster of proteins S8, S12 and S17 appears to hold together the shoulder and platform of the 30S subunit. The sequence is that of Small ribosomal subunit protein uS12 from Escherichia coli (strain K12 / MC4100 / BW2952).